The primary structure comprises 279 residues: Fatty acid metabolism regulator protein (279 aa).

The HTH gntR-type domain maps to Lys-6–Phe-74. Positions Glu-34–Gln-53 form a DNA-binding region, H-T-H motif.

As to quaternary structure, homodimer.

It localises to the cytoplasm. Functionally, multifunctional regulator of fatty acid metabolism. The chain is Fatty acid metabolism regulator protein from Vibrio vulnificus (strain CMCP6).